A 428-amino-acid polypeptide reads, in one-letter code: Dihydroorotase (428 aa).

The Zn(2+) site is built by His60 and His62. Substrate contacts are provided by residues His62 to Arg64 and Asn94. Residues Asp152, His179, and His232 each coordinate Zn(2+). Residue Asn278 coordinates substrate. Asp305 is a binding site for Zn(2+). The active site involves Asp305. Residues His309 and Phe323–Gly324 contribute to the substrate site.

This sequence belongs to the metallo-dependent hydrolases superfamily. DHOase family. Class I DHOase subfamily. Zn(2+) serves as cofactor.

It catalyses the reaction (S)-dihydroorotate + H2O = N-carbamoyl-L-aspartate + H(+). It functions in the pathway pyrimidine metabolism; UMP biosynthesis via de novo pathway; (S)-dihydroorotate from bicarbonate: step 3/3. Functionally, catalyzes the reversible cyclization of carbamoyl aspartate to dihydroorotate. This Anoxybacillus flavithermus (strain DSM 21510 / WK1) protein is Dihydroorotase.